We begin with the raw amino-acid sequence, 173 residues long: NADH-quinone oxidoreductase subunit I 1 (173 aa).

4Fe-4S ferredoxin-type domains follow at residues 41–73 (IVLTRDPDGQERCVACNLCAVACPVGCIDLAKA) and 83–112 (EHFRINFARCIFCGYCEEACPTAAIQLTPD). Positions 53, 56, 59, 63, 92, 95, 98, and 102 each coordinate [4Fe-4S] cluster.

The protein belongs to the complex I 23 kDa subunit family. In terms of assembly, NDH-1 is composed of 14 different subunits. Subunits NuoA, H, J, K, L, M, N constitute the membrane sector of the complex. [4Fe-4S] cluster is required as a cofactor.

Its subcellular location is the cell inner membrane. The catalysed reaction is a quinone + NADH + 5 H(+)(in) = a quinol + NAD(+) + 4 H(+)(out). In terms of biological role, NDH-1 shuttles electrons from NADH, via FMN and iron-sulfur (Fe-S) centers, to quinones in the respiratory chain. The immediate electron acceptor for the enzyme in this species is believed to be ubiquinone. Couples the redox reaction to proton translocation (for every two electrons transferred, four hydrogen ions are translocated across the cytoplasmic membrane), and thus conserves the redox energy in a proton gradient. The sequence is that of NADH-quinone oxidoreductase subunit I 1 from Rhodopseudomonas palustris (strain BisA53).